A 459-amino-acid chain; its full sequence is Phosphoglucosamine mutase (459 aa).

The active-site Phosphoserine intermediate is Ser-102. 4 residues coordinate Mg(2+): Ser-102, Asp-243, Asp-245, and Asp-247. A Phosphoserine modification is found at Ser-102.

Belongs to the phosphohexose mutase family. Mg(2+) is required as a cofactor. In terms of processing, activated by phosphorylation.

It carries out the reaction alpha-D-glucosamine 1-phosphate = D-glucosamine 6-phosphate. Catalyzes the conversion of glucosamine-6-phosphate to glucosamine-1-phosphate. This Bartonella quintana (strain Toulouse) (Rochalimaea quintana) protein is Phosphoglucosamine mutase.